Here is a 126-residue protein sequence, read N- to C-terminus: Small ribosomal subunit protein uS13 (126 aa).

The interval 94-126 (RNLPVHGQRTHTNARTRKGPRRAIAGKKKAGKK) is disordered.

It belongs to the universal ribosomal protein uS13 family. In terms of assembly, part of the 30S ribosomal subunit. Forms a loose heterodimer with protein S19. Forms two bridges to the 50S subunit in the 70S ribosome.

Located at the top of the head of the 30S subunit, it contacts several helices of the 16S rRNA. In the 70S ribosome it contacts the 23S rRNA (bridge B1a) and protein L5 of the 50S subunit (bridge B1b), connecting the 2 subunits; these bridges are implicated in subunit movement. Contacts the tRNAs in the A and P-sites. The protein is Small ribosomal subunit protein uS13 of Parafrankia sp. (strain EAN1pec).